Reading from the N-terminus, the 211-residue chain is ATP phosphoribosyltransferase (211 aa).

This sequence belongs to the ATP phosphoribosyltransferase family. Short subfamily. As to quaternary structure, heteromultimer composed of HisG and HisZ subunits.

It localises to the cytoplasm. The enzyme catalyses 1-(5-phospho-beta-D-ribosyl)-ATP + diphosphate = 5-phospho-alpha-D-ribose 1-diphosphate + ATP. The protein operates within amino-acid biosynthesis; L-histidine biosynthesis; L-histidine from 5-phospho-alpha-D-ribose 1-diphosphate: step 1/9. Catalyzes the condensation of ATP and 5-phosphoribose 1-diphosphate to form N'-(5'-phosphoribosyl)-ATP (PR-ATP). Has a crucial role in the pathway because the rate of histidine biosynthesis seems to be controlled primarily by regulation of HisG enzymatic activity. The chain is ATP phosphoribosyltransferase (hisG) from Pseudomonas aeruginosa (strain ATCC 15692 / DSM 22644 / CIP 104116 / JCM 14847 / LMG 12228 / 1C / PRS 101 / PAO1).